The sequence spans 108 residues: Large ribosomal subunit protein uL24 (108 aa).

It belongs to the universal ribosomal protein uL24 family. Part of the 50S ribosomal subunit.

Its function is as follows. One of two assembly initiator proteins, it binds directly to the 5'-end of the 23S rRNA, where it nucleates assembly of the 50S subunit. Functionally, one of the proteins that surrounds the polypeptide exit tunnel on the outside of the subunit. This Geobacter metallireducens (strain ATCC 53774 / DSM 7210 / GS-15) protein is Large ribosomal subunit protein uL24.